The sequence spans 236 residues: Baculoviral IAP repeat-containing protein 8 (236 aa).

One copy of the BIR repeat lies at 7-70 (RLITFGTWMY…KWYPGCKYLL (64 aa)). Positions 39, 42, 59, and 66 each coordinate Zn(2+). Residues 189–224 (CKICMDRHIAVVFIPCGHLVTCKQCAEAVDRCPMCS) form an RING-type zinc finger.

This sequence belongs to the IAP family. In terms of assembly, binds to caspase-9.

Its subcellular location is the cytoplasm. Its function is as follows. Protects against apoptosis mediated by BAX. This chain is Baculoviral IAP repeat-containing protein 8 (BIRC8), found in Pan troglodytes (Chimpanzee).